The chain runs to 1006 residues: MVYEAKIDPSLADLFRNSDKEPFPAMTHELPPEKSLKARLLEQEDERISNVLAHEKRFSTEPVVIDDVFMSRLCVDSQPGCSRIPDIDIANVFRDDLESCTLSSSEDEEEEEEPIGQISTFEMLHAPRKPIVWSEQELSDFDMKSRLLDMRMDHWDLARIANVPKRIAKGETVNLRMPRYSAEVVKQRIAKGVTDIFGHFSLVPHTLTKSHKPVAERKQILIERYHDLMNDFDYATRPGSVESKKYANLTKRLNLCNDFLSAPKLPHRLFPRLIIRSIRPPETPKEPVKRKMRESESDDSVIIIPRKIEKEKPRPTTENVVLKKVEMEKKRPRSPELVPKKIVMEKERPSSPDSEAEEREHNLRIEKERHQKELEFRREALRKREQEREEHKKRAQEELRRQMTAALEESTRRQAEMNRQIEDEARKRDELQRIAEEKKRKQLLEDQCRAKQEKEKRDAEELEQMRLNIARLAGTKDVENALKSPSLVEIVPPSDARAFEMIKWNAVKCKIPENWEKRKDKFYRVFEWPSDAAQRDIERDEVVSIPRSKPIVIPQEDTYITRNRIPLKLPPKVKQAVPALVVRNSNNATRTVVAATVNENGIQWPAETINIDEVVREIRGLMAPTRRNFAISLSPKTDEIDYQAINLNRLKSGIVYPFYFSDGLYWPLVFLKSSKNGKPEAQRHVEALTSCKSFSGKYASRYLLTTTKEEDSATKKFEDAYADSDGDWADYSTKPGRFSNRAGFKPHYDTSNDSFEVQKQRAVDSLNSQYEKERNELDAFGRYTDEYRKRKDRAQYQNHIKTHLRELVRDARLDAFSFKEEFKDFEGGFEDYPGTRVEPYENDWYSHGYTLYSHTRDAAYADYMHDVCKPYEDMLPPTEYHEIFNEWCFTPMLASLHYQLKKNAFDVLSPQDVKDMEARHRKYIGLVQKERKFSLEQALDVCKLTDYDKRQWTILHDQLVTHFKDFPSISGLVYDRNTNLLANVNRNLKHLFSTIYRDDSPPDDQF.

Positions 326-371 (EMEKKRPRSPELVPKKIVMEKERPSSPDSEAEEREHNLRIEKERHQ) are disordered. 2 stretches are compositionally biased toward basic and acidic residues: residues 338–350 (VPKK…ERPS) and 358–371 (EREH…ERHQ). 2 coiled-coil regions span residues 358–473 (EREH…ARLA) and 756–782 (EVQK…AFGR).

This is an uncharacterized protein from Caenorhabditis elegans.